The primary structure comprises 366 residues: Chorismate synthase (366 aa).

Residues R48 and R54 each contribute to the NADP(+) site. Residues 129–131 (RSS), 241–242 (NA), G290, 305–309 (KPTSS), and R331 contribute to the FMN site.

This sequence belongs to the chorismate synthase family. In terms of assembly, homotetramer. The cofactor is FMNH2.

It carries out the reaction 5-O-(1-carboxyvinyl)-3-phosphoshikimate = chorismate + phosphate. It participates in metabolic intermediate biosynthesis; chorismate biosynthesis; chorismate from D-erythrose 4-phosphate and phosphoenolpyruvate: step 7/7. Its function is as follows. Catalyzes the anti-1,4-elimination of the C-3 phosphate and the C-6 proR hydrogen from 5-enolpyruvylshikimate-3-phosphate (EPSP) to yield chorismate, which is the branch point compound that serves as the starting substrate for the three terminal pathways of aromatic amino acid biosynthesis. This reaction introduces a second double bond into the aromatic ring system. The polypeptide is Chorismate synthase (Nitrobacter hamburgensis (strain DSM 10229 / NCIMB 13809 / X14)).